The chain runs to 832 residues: Translation initiation factor IF-2 (832 aa).

The segment at 1-244 is disordered; it reads MSDTDGKKTL…KAMGGSQERE (244 aa). A compositionally biased stretch (polar residues) spans 18 to 27; sequence TGQVKQSFSH. Positions 81–141 are enriched in basic and acidic residues; the sequence is KANESEEAER…EARKKAEADA (61 aa). Residues 142–171 show a composition bias toward low complexity; that stretch reads SSKPAAARSKADDPATMDPAAAQAAEARGA. Composition is skewed to basic and acidic residues over residues 178-201 and 227-244; these read PRKE…DDRR and RKQE…QERE. A tr-type G domain is found at 329–497; sequence PRPPVITVMG…SIALQAEILE (169 aa). The G1 stretch occupies residues 338-345; it reads GHVDHGKT. 338-345 is a binding site for GTP; it reads GHVDHGKT. The interval 363 to 367 is G2; sequence GITQH. A G3 region spans residues 385–388; that stretch reads DTPG. GTP is bound by residues 385 to 389 and 439 to 442; these read DTPGH and NKID. A G4 region spans residues 439-442; the sequence is NKID. The tract at residues 475-477 is G5; that stretch reads SAI.

Belongs to the TRAFAC class translation factor GTPase superfamily. Classic translation factor GTPase family. IF-2 subfamily.

The protein localises to the cytoplasm. In terms of biological role, one of the essential components for the initiation of protein synthesis. Protects formylmethionyl-tRNA from spontaneous hydrolysis and promotes its binding to the 30S ribosomal subunits. Also involved in the hydrolysis of GTP during the formation of the 70S ribosomal complex. The polypeptide is Translation initiation factor IF-2 (Dinoroseobacter shibae (strain DSM 16493 / NCIMB 14021 / DFL 12)).